The following is a 715-amino-acid chain: Scinderin (715 aa).

Residues 1–363 (MARELYHEEF…DGFGKVYVTE (363 aa)) are actin-severing. One copy of the Gelsolin-like 1 repeat lies at 27 to 76 (LELVPVPQSAHGDFYVGDAYLVLHTAKTSRGFTYHLHFWLGKECSQDEST). A Phosphotyrosine modification is found at Y102. A 1,2-diacyl-sn-glycero-3-phospho-(1D-myo-inositol-4,5-bisphosphate) is bound by residues 112 to 119 (KGGLKYKA) and 138 to 146 (RLLHVKGRR). Gelsolin-like repeat units follow at residues 148–188 (VRAT…YERL), 265–307 (VVAE…QERK), 398–451 (VEIW…DELT), and 523–564 (TRIV…EEEK). Residues 364 to 715 (KVAQIKQIPF…WFLGWDSSKW (352 aa)) form a ca(2+)-dependent actin binding region. N538, D539, and E562 together coordinate Ca(2+). The residue at position 599 (Y599) is a Phosphotyrosine. The stretch at 626–668 (FVIEEIPGEFTQDDLAEDDVMLLDAWEQIFIWIGKDANEVEKK) is one Gelsolin-like 6 repeat. D643, D644, and E666 together coordinate Ca(2+).

It belongs to the villin/gelsolin family. As to expression, expressed in megakaryocytes.

The protein localises to the cytoplasm. The protein resides in the cytoskeleton. Its subcellular location is the cell projection. It is found in the podosome. Ca(2+)-dependent actin filament-severing protein that has a regulatory function in exocytosis by affecting the organization of the microfilament network underneath the plasma membrane. Severing activity is inhibited by phosphatidylinositol 4,5-bis-phosphate (PIP2). In vitro, also has barbed end capping and nucleating activities in the presence of Ca(2+). Required for megakaryocyte differentiation, maturation, polyploidization and apoptosis with the release of platelet-like particles. Plays a role in osteoclastogenesis (OCG) and actin cytoskeletal organization in osteoclasts. Regulates chondrocyte proliferation and differentiation. Inhibits cell proliferation and tumorigenesis. Signaling is mediated by MAPK, p38 and JNK pathways. This chain is Scinderin, found in Homo sapiens (Human).